A 619-amino-acid chain; its full sequence is Kinesin light chain 4 (619 aa).

S2 bears the N-acetylserine mark. A coiled-coil region spans residues 32–150; it reads GLESLHSEHQ…EEEKKHLEFL (119 aa). One copy of the TPR 1 repeat lies at 55–88; sequence QQGGHEEGLVHEKARQLRRSMENIELGLSEAQVM. The span at 156–175 shows a compositional bias: basic and acidic residues; that stretch reads YDEDGHSMEEKEGDASKDSL. A disordered region spans residues 156 to 200; that stretch reads YDEDGHSMEEKEGDASKDSLDDLFPNEEEEDSSNDLSRGQGAAAA. At S174 the chain carries Phosphoserine. Positions 179–188 are enriched in acidic residues; sequence FPNEEEEDSS. 5 TPR repeats span residues 211–244, 253–286, 295–328, 337–370, and 379–412; these read LRTL…LERT, ATML…REST, AATL…REKV, AKQL…YERQ, and ARTK…AHVQ. Phosphoserine is present on S460. The TPR 7 repeat unit spans residues 464–497; it reads NTTLRNLGALYRRQGKLEAAETLEECALRSRKQG. Phosphoserine occurs at positions 565, 566, and 590. A disordered region spans residues 571-619; sequence RKLQGTEPRPSSSNMKRAASLNYLNQPNAAPLQTSRGLSASTVDLSSSS. Over residues 592–608 the composition is skewed to polar residues; the sequence is NYLNQPNAAPLQTSRGL. The segment covering 609–619 has biased composition (low complexity); the sequence is SASTVDLSSSS. T612 is subject to Phosphothreonine.

Belongs to the kinesin light chain family. As to quaternary structure, oligomeric complex composed of two heavy chains and two light chains.

It localises to the cytoplasm. The protein localises to the cytoskeleton. Its function is as follows. Kinesin is a microtubule-associated force-producing protein that may play a role in organelle transport. The light chain may function in coupling of cargo to the heavy chain or in the modulation of its ATPase activity. The protein is Kinesin light chain 4 (Klc4) of Rattus norvegicus (Rat).